Consider the following 620-residue polypeptide: Synchronized import protein 1 (620 aa).

The disordered stretch occupies residues 1 to 32; it reads MGRSKKRSRASSSRLNPLRKAGSNDNNKDTNV. ARM repeat units lie at residues 25 to 64, 66 to 106, 181 to 221, 258 to 299, 340 to 386, 435 to 470, 471 to 510, and 564 to 607; these read DNNKDTNVVNKKLQPLLQNLSSVVPNDRSIALSSISVLCE, AHMR…NLSL, DDIL…TTLD, ANEL…NIDP, IKLQ…NFLP, DSQDDLSIKIGRMGCIWALLKLIFPDGAFESENRAL, INVQMLNNSGFARGIIEEFQNNNDLELQQKCINVLSTYAM, and RGGF…TLDS.

This sequence belongs to the nuclear import and ribosome assembly adapter family. As to quaternary structure, forms a heterotrimeric complex with RPL5 and RPL11A or RPL11B; interaction of this complex with KAP104 allows the nuclear import of the heterotrimer. Component of a hexameric 5S RNP precursor complex, composed of 5S RNA, RRS1, RPF2, RPL5, RPL11A/RPL11B and SYO1; this complex acts as a precursor for ribosome assembly.

It is found in the cytoplasm. Its subcellular location is the nucleus. Nuclear import adapter that specifically recruits the two functionally and topologically linked ribosomal proteins RPL5 and RPL11 (encoded by RPL11A and RPL11B). Guarantees that this cargo pair remains bound together from the time of synthesis in the cytoplasm until delivery to the nascent 5S rRNA in the nucleus. This is Synchronized import protein 1 (SYO1) from Saccharomyces cerevisiae (strain ATCC 204508 / S288c) (Baker's yeast).